Reading from the N-terminus, the 108-residue chain is Insulin (108 aa).

Residues 1 to 24 (MALWTRLLPLLALLALWAPAPAQA) form the signal peptide. Intrachain disulfides connect Cys31-Cys94, Cys43-Cys107, and Cys93-Cys98. The propeptide at 57–85 (EAENPQAGAVELGGGLGGLQALALEGPPQ) is c peptide.

It belongs to the insulin family. Heterodimer of a B chain and an A chain linked by two disulfide bonds.

It localises to the secreted. Insulin decreases blood glucose concentration. It increases cell permeability to monosaccharides, amino acids and fatty acids. It accelerates glycolysis, the pentose phosphate cycle, and glycogen synthesis in liver. The sequence is that of Insulin (INS) from Sus scrofa (Pig).